Consider the following 285-residue polypeptide: Nucleotide-binding protein Pnap_0906 (285 aa).

An ATP-binding site is contributed by 8–15 (GMSGSGKS). 57-60 (DVRS) serves as a coordination point for GTP.

This sequence belongs to the RapZ-like family.

In terms of biological role, displays ATPase and GTPase activities. The chain is Nucleotide-binding protein Pnap_0906 from Polaromonas naphthalenivorans (strain CJ2).